The following is a 623-amino-acid chain: Myosin light chain kinase 2, skeletal/cardiac muscle (623 aa).

2 disordered regions span residues 1-179 (MATE…PSCP) and 204-251 (GVPV…QGDT). Alanine 2 bears the N-acetylalanine mark. The span at 20–31 (APKAAAGEGPPA) shows a compositional bias: low complexity. Basic and acidic residues-rich tracts occupy residues 32-43 (AEKDPGPPDPQK) and 49-89 (DPEK…EKGD). The span at 90-102 (GASAQPSASSQGP) shows a compositional bias: low complexity. The segment covering 150–159 (GEAKEQKKVA) has biased composition (basic and acidic residues). Serine 169, serine 175, and serine 177 each carry phosphoserine. Residues 204-214 (GVPVTPGPTET) are compositionally biased toward low complexity. A compositionally biased stretch (basic and acidic residues) spans 215–224 (EPAKVAEGEK). Residues 312–567 (LNSKEALGGG…AAQCLAHPWL (256 aa)) form the Protein kinase domain. ATP-binding positions include 318-326 (LGGGKFGAV) and lysine 341. Aspartate 433 serves as the catalytic Proton acceptor. The residue at position 472 (threonine 472) is a Phosphothreonine. The calmodulin-binding stretch occupies residues 601-613 (IAVSAANRFKKIS).

The protein belongs to the protein kinase superfamily. CAMK Ser/Thr protein kinase family. In terms of assembly, may interact with centrin.

The protein localises to the cytoplasm. It carries out the reaction L-seryl-[myosin light chain] + ATP = O-phospho-L-seryl-[myosin light chain] + ADP + H(+). It catalyses the reaction L-threonyl-[myosin light chain] + ATP = O-phospho-L-threonyl-[myosin light chain] + ADP + H(+). Implicated in the level of global muscle contraction and cardiac function. Phosphorylates a specific serine in the N-terminus of a myosin light chain. This Bos taurus (Bovine) protein is Myosin light chain kinase 2, skeletal/cardiac muscle (MYLK2).